The primary structure comprises 233 residues: UPF0173 metal-dependent hydrolase Igni_1254 (233 aa).

This sequence belongs to the UPF0173 family.

This is UPF0173 metal-dependent hydrolase Igni_1254 from Ignicoccus hospitalis (strain KIN4/I / DSM 18386 / JCM 14125).